A 135-amino-acid polypeptide reads, in one-letter code: Mini-ribonuclease 3 (135 aa).

D19 is an active-site residue.

The protein belongs to the MrnC RNase family. In terms of assembly, homodimer. Requires Mg(2+) as cofactor.

Its subcellular location is the cytoplasm. Functionally, involved in correct processing of both the 5' and 3' ends of 23S rRNA precursor. Processes 30S rRNA precursor transcript even in absence of ribonuclease 3 (Rnc); Rnc processes 30S rRNA into smaller rRNA precursors. The protein is Mini-ribonuclease 3 of Gloeobacter violaceus (strain ATCC 29082 / PCC 7421).